The following is a 404-amino-acid chain: Homocysteine-responsive endoplasmic reticulum-resident ubiquitin-like domain member 2 protein (404 aa).

One can recognise a Ubiquitin-like domain in the interval 10-89 (VTLIIKAPNQ…HMVHLVCASR (80 aa)). The disordered stretch occupies residues 86-153 (CASRSPPSSP…TLSQAQTDPA (68 aa)). 2 stretches are compositionally biased toward low complexity: residues 88–97 (SRSPPSSPKS) and 109–126 (SSTS…PSPS). A compositionally biased stretch (polar residues) spans 127-153 (QESLSLVTGSSEGLRQRTLSQAQTDPA). A helical membrane pass occupies residues 301-321 (FIMVMGAMLLVYLHQAGWFPF).

It is found in the membrane. Could be involved in the unfolded protein response (UPR) pathway. In Mus musculus (Mouse), this protein is Homocysteine-responsive endoplasmic reticulum-resident ubiquitin-like domain member 2 protein (Herpud2).